A 419-amino-acid polypeptide reads, in one-letter code: Elongation factor Tu, chloroplastic (419 aa).

Residues 10 to 214 (KPHVNIGTIG…TVDEHIPTPK (205 aa)) form the tr-type G domain. Residues 19-26 (GHVDHGKT) form a G1 region. 19–26 (GHVDHGKT) contributes to the GTP binding site. Thr-26 serves as a coordination point for Mg(2+). Residues 60–64 (GITIN) are G2. The segment at 81–84 (DCPG) is G3. GTP is bound by residues 81 to 85 (DCPGH) and 136 to 139 (NKAD). The tract at residues 136-139 (NKAD) is G4. Positions 174 to 176 (SAL) are G5.

The protein belongs to the TRAFAC class translation factor GTPase superfamily. Classic translation factor GTPase family. EF-Tu/EF-1A subfamily.

It localises to the plastid. It is found in the chloroplast. The catalysed reaction is GTP + H2O = GDP + phosphate + H(+). GTP hydrolase that promotes the GTP-dependent binding of aminoacyl-tRNA to the A-site of ribosomes during protein biosynthesis. The polypeptide is Elongation factor Tu, chloroplastic (tufA) (Stigeoclonium helveticum (Green alga)).